Here is a 160-residue protein sequence, read N- to C-terminus: Large ribosomal subunit protein uL16 (160 aa).

This sequence belongs to the universal ribosomal protein uL16 family. As to quaternary structure, part of the 50S ribosomal subunit.

Its function is as follows. Binds 23S rRNA and is also seen to make contacts with the A and possibly P site tRNAs. The chain is Large ribosomal subunit protein uL16 from Prochlorococcus marinus (strain MIT 9301).